We begin with the raw amino-acid sequence, 90 residues long: Small ribosomal subunit protein bS18 (90 aa).

It belongs to the bacterial ribosomal protein bS18 family. Part of the 30S ribosomal subunit. Forms a tight heterodimer with protein bS6.

In terms of biological role, binds as a heterodimer with protein bS6 to the central domain of the 16S rRNA, where it helps stabilize the platform of the 30S subunit. In Bordetella bronchiseptica (strain ATCC BAA-588 / NCTC 13252 / RB50) (Alcaligenes bronchisepticus), this protein is Small ribosomal subunit protein bS18.